The following is a 232-amino-acid chain: Ribose-5-phosphate isomerase A (232 aa).

Residues 31–34, 87–90, and 100–103 each bind substrate; these read TGST, DGAD, and KGGG. Glutamate 109 (proton acceptor) is an active-site residue. Lysine 127 is a substrate binding site.

It belongs to the ribose 5-phosphate isomerase family. Homodimer.

The catalysed reaction is aldehydo-D-ribose 5-phosphate = D-ribulose 5-phosphate. Its pathway is carbohydrate degradation; pentose phosphate pathway; D-ribose 5-phosphate from D-ribulose 5-phosphate (non-oxidative stage): step 1/1. In terms of biological role, catalyzes the reversible conversion of ribose-5-phosphate to ribulose 5-phosphate. The sequence is that of Ribose-5-phosphate isomerase A from Bifidobacterium longum (strain NCC 2705).